Here is a 123-residue protein sequence, read N- to C-terminus: Putative hypoxanthine phosphoribosyltransferase (123 aa).

Functionally, may play a role in purine salvage. The sequence is that of Putative hypoxanthine phosphoribosyltransferase from Methanosarcina mazei (strain ATCC BAA-159 / DSM 3647 / Goe1 / Go1 / JCM 11833 / OCM 88) (Methanosarcina frisia).